The primary structure comprises 187 residues: Meiotically up-regulated protein C1442.13c (187 aa).

Disordered stretches follow at residues 15-46 (QWENVEASPKPPPRKPKIVQPKKKPSKHLSNE) and 119-145 (IQEGSVSTNTKKRMDGHVVGSSAPAIN). The span at 26 to 41 (PPRKPKIVQPKKKPSK) shows a compositional bias: basic residues. The region spanning 145-187 (NNGKGKQLLEMMGWSRGKGLGSENQGMVDPVVAVVKNNKQGLH) is the G-patch domain.

It is found in the nucleus. It localises to the cytoplasm. The protein localises to the cytoskeleton. The protein resides in the microtubule organizing center. Its subcellular location is the spindle pole body. Its function is as follows. Has a role in meiosis and sporulation. Required for meiotic chromosome segregation. This is Meiotically up-regulated protein C1442.13c from Schizosaccharomyces pombe (strain 972 / ATCC 24843) (Fission yeast).